Here is a 276-residue protein sequence, read N- to C-terminus: NH(3)-dependent NAD(+) synthetase (276 aa).

43-50 (GISGGVDS) is an ATP binding site. D49 contacts Mg(2+). A deamido-NAD(+)-binding site is contributed by R146. Residue T166 coordinates ATP. E171 is a binding site for Mg(2+). Residues K179 and D186 each contribute to the deamido-NAD(+) site. Residues K195 and T217 each contribute to the ATP site. A deamido-NAD(+)-binding site is contributed by 266–267 (HK).

This sequence belongs to the NAD synthetase family. Homodimer.

The enzyme catalyses deamido-NAD(+) + NH4(+) + ATP = AMP + diphosphate + NAD(+) + H(+). It functions in the pathway cofactor biosynthesis; NAD(+) biosynthesis; NAD(+) from deamido-NAD(+) (ammonia route): step 1/1. Functionally, catalyzes the ATP-dependent amidation of deamido-NAD to form NAD. Uses ammonia as a nitrogen source. This chain is NH(3)-dependent NAD(+) synthetase, found in Shewanella oneidensis (strain ATCC 700550 / JCM 31522 / CIP 106686 / LMG 19005 / NCIMB 14063 / MR-1).